The following is a 282-amino-acid chain: Putative 4-diphosphocytidyl-2-C-methyl-D-erythritol kinase (282 aa).

The active site involves Lys-10. ATP is bound at residue 94-104 (PICAGLGGGSS). Residue Asp-136 is part of the active site.

This sequence belongs to the GHMP kinase family. IspE subfamily.

It carries out the reaction 4-CDP-2-C-methyl-D-erythritol + ATP = 4-CDP-2-C-methyl-D-erythritol 2-phosphate + ADP + H(+). Functionally, catalyzes the phosphorylation of the position 2 hydroxy group of 4-diphosphocytidyl-2C-methyl-D-erythritol. The chain is Putative 4-diphosphocytidyl-2-C-methyl-D-erythritol kinase (ipk) from Streptococcus mutans serotype c (strain ATCC 700610 / UA159).